A 117-amino-acid chain; its full sequence is UPF0102 protein RSKD131_0118 (117 aa).

This sequence belongs to the UPF0102 family.

This Cereibacter sphaeroides (strain KD131 / KCTC 12085) (Rhodobacter sphaeroides) protein is UPF0102 protein RSKD131_0118.